Consider the following 367-residue polypeptide: Probable outer membrane usher protein LpfC (367 aa).

Positions 1 to 30 (MSRKTVSRTFSSFSISVVAVAVASTFSAHA) are cleaved as a signal peptide.

Belongs to the fimbrial export usher family.

Its subcellular location is the cell outer membrane. Part of the lpfABCC'DE fimbrial operon. LP fimbriae may participate in the interaction with eukaryotic cells by assisting in microcolony formation. Could be involved in the export and assembly of the fimbrial subunits across the outer membrane. The sequence is that of Probable outer membrane usher protein LpfC (lpfC) from Escherichia coli O157:H7.